Here is a 101-residue protein sequence, read N- to C-terminus: NAD(P)H-quinone oxidoreductase subunit 4L, chloroplastic (101 aa).

Helical transmembrane passes span 2–22 (MLEHVLVLSAYLFSIGIYGLI), 32–52 (MCLELILNAVNMNLVTFSDLF), and 61–81 (IFSIFVIAIAAAEAAIGPAIV).

It belongs to the complex I subunit 4L family. NDH is composed of at least 16 different subunits, 5 of which are encoded in the nucleus.

The protein localises to the plastid. The protein resides in the chloroplast thylakoid membrane. It carries out the reaction a plastoquinone + NADH + (n+1) H(+)(in) = a plastoquinol + NAD(+) + n H(+)(out). The enzyme catalyses a plastoquinone + NADPH + (n+1) H(+)(in) = a plastoquinol + NADP(+) + n H(+)(out). NDH shuttles electrons from NAD(P)H:plastoquinone, via FMN and iron-sulfur (Fe-S) centers, to quinones in the photosynthetic chain and possibly in a chloroplast respiratory chain. The immediate electron acceptor for the enzyme in this species is believed to be plastoquinone. Couples the redox reaction to proton translocation, and thus conserves the redox energy in a proton gradient. The protein is NAD(P)H-quinone oxidoreductase subunit 4L, chloroplastic of Chloranthus spicatus (Chulantree).